The sequence spans 272 residues: D-aminoacyl-tRNA deacylase (272 aa).

In terms of assembly, monomer. It depends on Zn(2+) as a cofactor.

The catalysed reaction is a D-aminoacyl-tRNA + H2O = a tRNA + a D-alpha-amino acid + H(+). It catalyses the reaction glycyl-tRNA(Ala) + H2O = tRNA(Ala) + glycine + H(+). The enzyme catalyses D-tyrosyl-tRNA(Tyr) + H2O = D-tyrosine + tRNA(Tyr). Its function is as follows. D-aminoacyl-tRNA deacylase with broad substrate specificity. By recycling D-aminoacyl-tRNA to D-amino acids and free tRNA molecules, this enzyme counteracts the toxicity associated with the formation of D-aminoacyl-tRNA entities in vivo. Catalyzes the hydrolysis of D-tyrosyl-tRNA(Tyr) and D-aspartyl-tRNA(Asp). This is D-aminoacyl-tRNA deacylase from Pyrococcus abyssi (strain GE5 / Orsay).